A 428-amino-acid polypeptide reads, in one-letter code: Phosphomethylpyrimidine synthase 1 (428 aa).

Substrate-binding positions include M94, Y123, H162, 184–186 (SRG), 225–228 (NGMR), and E264. H268 contributes to the Zn(2+) binding site. Y291 is a binding site for substrate. H332 provides a ligand contact to Zn(2+). [4Fe-4S] cluster-binding residues include C408, C411, and C415.

The protein belongs to the ThiC family. [4Fe-4S] cluster serves as cofactor.

The catalysed reaction is 5-amino-1-(5-phospho-beta-D-ribosyl)imidazole + S-adenosyl-L-methionine = 4-amino-2-methyl-5-(phosphooxymethyl)pyrimidine + CO + 5'-deoxyadenosine + formate + L-methionine + 3 H(+). It participates in cofactor biosynthesis; thiamine diphosphate biosynthesis. Its function is as follows. Catalyzes the synthesis of the hydroxymethylpyrimidine phosphate (HMP-P) moiety of thiamine from aminoimidazole ribotide (AIR) in a radical S-adenosyl-L-methionine (SAM)-dependent reaction. This Methanosarcina barkeri (strain Fusaro / DSM 804) protein is Phosphomethylpyrimidine synthase 1.